Here is a 213-residue protein sequence, read N- to C-terminus: Nicotinate-nucleotide adenylyltransferase (213 aa).

This sequence belongs to the NadD family.

It catalyses the reaction nicotinate beta-D-ribonucleotide + ATP + H(+) = deamido-NAD(+) + diphosphate. It participates in cofactor biosynthesis; NAD(+) biosynthesis; deamido-NAD(+) from nicotinate D-ribonucleotide: step 1/1. Functionally, catalyzes the reversible adenylation of nicotinate mononucleotide (NaMN) to nicotinic acid adenine dinucleotide (NaAD). The polypeptide is Nicotinate-nucleotide adenylyltransferase (Salmonella typhimurium (strain LT2 / SGSC1412 / ATCC 700720)).